A 299-amino-acid chain; its full sequence is MLENVDLISAIITPFDDQLKINFTALERLTNHLIETGNTGFIIGGTTGETPTLTHAEKLGLYTRFAEIVAGRVPIIAGTGSNNTQATIDFTKEVRQIDGIIAALVVTPYYNKPNQRGMVAHFKTVARQADFPIMMYNIPGRTGVQMENATIVELSQEPNIIGIKQCTNLNDIGFLVENTPNDFAVYTGNDPETLGAVALGANGVASVASHIYGYQIRALLDAVKHGDLLKAGKLQRELTPKMEALFLYPSPAPVKAVLNAQNWSVGSPRLPILPLNQKEKLNLAHQLGVNHLADVQLHY.

A pyruvate-binding site is contributed by threonine 47. The Proton donor/acceptor role is filled by tyrosine 136. Lysine 164 serves as the catalytic Schiff-base intermediate with substrate. Pyruvate is bound at residue alanine 205.

This sequence belongs to the DapA family. As to quaternary structure, homotetramer; dimer of dimers.

The protein resides in the cytoplasm. The catalysed reaction is L-aspartate 4-semialdehyde + pyruvate = (2S,4S)-4-hydroxy-2,3,4,5-tetrahydrodipicolinate + H2O + H(+). Its pathway is amino-acid biosynthesis; L-lysine biosynthesis via DAP pathway; (S)-tetrahydrodipicolinate from L-aspartate: step 3/4. Its function is as follows. Catalyzes the condensation of (S)-aspartate-beta-semialdehyde [(S)-ASA] and pyruvate to 4-hydroxy-tetrahydrodipicolinate (HTPA). The polypeptide is 4-hydroxy-tetrahydrodipicolinate synthase (Pediococcus pentosaceus (strain ATCC 25745 / CCUG 21536 / LMG 10740 / 183-1w)).